A 1859-amino-acid polypeptide reads, in one-letter code: Protein TIC 214 (1859 aa).

6 consecutive transmembrane segments (helical) span residues Ile-18 to Gly-38, Phe-64 to Leu-84, Pro-87 to His-107, Leu-124 to Leu-144, Val-172 to Ile-192, and Ile-221 to Ile-241. Positions Lys-247–Glu-314 are disordered. The span at Gly-256–Thr-268 shows a compositional bias: acidic residues. The span at Lys-273 to Glu-284 shows a compositional bias: basic and acidic residues. Residues Glu-295–Glu-306 show a composition bias toward acidic residues.

This sequence belongs to the TIC214 family. As to quaternary structure, part of the Tic complex.

It localises to the plastid. The protein localises to the chloroplast inner membrane. In terms of biological role, involved in protein precursor import into chloroplasts. May be part of an intermediate translocation complex acting as a protein-conducting channel at the inner envelope. This is Protein TIC 214 from Buxus microphylla (Littleleaf boxwood).